Reading from the N-terminus, the 192-residue chain is uncharacterized protein (192 aa).

This sequence to A.aeolicus AQ_054.

This is an uncharacterized protein from Thermotoga maritima (strain ATCC 43589 / DSM 3109 / JCM 10099 / NBRC 100826 / MSB8).